We begin with the raw amino-acid sequence, 88 residues long: Large ribosomal subunit protein bL31B (88 aa).

It belongs to the bacterial ribosomal protein bL31 family. Type B subfamily. As to quaternary structure, part of the 50S ribosomal subunit.

The chain is Large ribosomal subunit protein bL31B from Corynebacterium diphtheriae (strain ATCC 700971 / NCTC 13129 / Biotype gravis).